The primary structure comprises 491 residues: UDP-N-acetylmuramate--L-alanine ligase (491 aa).

Residue 126-132 (GTHGKTT) coordinates ATP.

It belongs to the MurCDEF family.

Its subcellular location is the cytoplasm. It catalyses the reaction UDP-N-acetyl-alpha-D-muramate + L-alanine + ATP = UDP-N-acetyl-alpha-D-muramoyl-L-alanine + ADP + phosphate + H(+). The protein operates within cell wall biogenesis; peptidoglycan biosynthesis. Its function is as follows. Cell wall formation. The chain is UDP-N-acetylmuramate--L-alanine ligase from Salmonella choleraesuis (strain SC-B67).